The following is a 156-amino-acid chain: Small ribosomal subunit protein uS7 (156 aa).

Belongs to the universal ribosomal protein uS7 family. Part of the 30S ribosomal subunit. Contacts proteins S9 and S11.

Its function is as follows. One of the primary rRNA binding proteins, it binds directly to 16S rRNA where it nucleates assembly of the head domain of the 30S subunit. Is located at the subunit interface close to the decoding center, probably blocks exit of the E-site tRNA. This Laribacter hongkongensis (strain HLHK9) protein is Small ribosomal subunit protein uS7.